Reading from the N-terminus, the 286-residue chain is 4-diphosphocytidyl-2-C-methyl-D-erythritol kinase (286 aa).

Lys13 is a catalytic residue. Residue Pro96–Ser106 participates in ATP binding. The active site involves Asp138.

The protein belongs to the GHMP kinase family. IspE subfamily.

It carries out the reaction 4-CDP-2-C-methyl-D-erythritol + ATP = 4-CDP-2-C-methyl-D-erythritol 2-phosphate + ADP + H(+). It functions in the pathway isoprenoid biosynthesis; isopentenyl diphosphate biosynthesis via DXP pathway; isopentenyl diphosphate from 1-deoxy-D-xylulose 5-phosphate: step 3/6. In terms of biological role, catalyzes the phosphorylation of the position 2 hydroxy group of 4-diphosphocytidyl-2C-methyl-D-erythritol. The polypeptide is 4-diphosphocytidyl-2-C-methyl-D-erythritol kinase (Pseudoalteromonas atlantica (strain T6c / ATCC BAA-1087)).